The chain runs to 101 residues: Replication restart protein PriB (101 aa).

Residues 1–101 (MTTNNLVLAG…LHAENVELKT (101 aa)) enclose the SSB domain.

Belongs to the PriB family. As to quaternary structure, homodimer. Interacts with PriA and DnaT. Component of the replication restart primosome. Primosome assembly occurs via a 'hand-off' mechanism. PriA binds to replication forks, subsequently PriB then DnaT bind; DnaT then displaces ssDNA to generate the helicase loading substrate.

In terms of biological role, involved in the restart of stalled replication forks, which reloads the replicative helicase on sites other than the origin of replication; the PriA-PriB pathway is the major replication restart pathway. During primosome assembly it facilitates complex formation between PriA and DnaT on DNA; stabilizes PriA on DNA. Stimulates the DNA unwinding activity of PriA helicase. This is Replication restart protein PriB from Shewanella pealeana (strain ATCC 700345 / ANG-SQ1).